Reading from the N-terminus, the 801-residue chain is Phenylalanine--tRNA ligase beta subunit (801 aa).

One can recognise a tRNA-binding domain in the interval 39 to 153; the sequence is AAGLSKIVVG…EDAVPGEEVF (115 aa). One can recognise a B5 domain in the interval 406-481; the sequence is TSDVEVSSTL…RIYGYDRLPT (76 aa). Positions 459, 465, 468, and 469 each coordinate Mg(2+). The FDX-ACB domain occupies 708–801; the sequence is TKFPAVSRDV…LEEKVNAEVR (94 aa).

It belongs to the phenylalanyl-tRNA synthetase beta subunit family. Type 1 subfamily. As to quaternary structure, tetramer of two alpha and two beta subunits. It depends on Mg(2+) as a cofactor.

The protein resides in the cytoplasm. The catalysed reaction is tRNA(Phe) + L-phenylalanine + ATP = L-phenylalanyl-tRNA(Phe) + AMP + diphosphate + H(+). In Streptococcus pneumoniae serotype 4 (strain ATCC BAA-334 / TIGR4), this protein is Phenylalanine--tRNA ligase beta subunit.